The primary structure comprises 425 residues: MLDSRFVREQADRARQALAHRNEDPVMIDAFLGYDTARKDILAEIEALRHKRNVASDTIAQMKKAGQTADEPIAAMREVSAKIKELEVLLAENQEKSDALLMRIPNIPHASVPIGPDESANVTEREVGTPPAFDFAPRPHEEIGEALGIFDFARAAKIAGARFPLYKGAGALMERALINFMLDIHTTEHGYTECLPPLMVNAKTMTGTGQLPKFEEDLFKLERWGFYLIPTAEVPVTNIFADEILNEADLPIKYTAYTPCFRSEAGSYGKDTKGLIRQHQFNKVELVKFAHPEHSYDELEKLLADAETILQRLGLAYRVITLCSGDMGFSAAKTYDIEVWFPAQNRYREISSCSNFEDFQARRANIRFKRPGQKGTGFVHTLNGSGLAVGRTLAAILENFQTKEGAVEIPDTLRPYMRNMAVLSL.

An L-serine-binding site is contributed by Thr231 to Glu233. Position 262–264 (Arg262–Glu264) interacts with ATP. Glu285 serves as a coordination point for L-serine. Glu349–Ser352 provides a ligand contact to ATP. Ser385 is an L-serine binding site.

The protein belongs to the class-II aminoacyl-tRNA synthetase family. Type-1 seryl-tRNA synthetase subfamily. In terms of assembly, homodimer. The tRNA molecule binds across the dimer.

It is found in the cytoplasm. The catalysed reaction is tRNA(Ser) + L-serine + ATP = L-seryl-tRNA(Ser) + AMP + diphosphate + H(+). The enzyme catalyses tRNA(Sec) + L-serine + ATP = L-seryl-tRNA(Sec) + AMP + diphosphate + H(+). Its pathway is aminoacyl-tRNA biosynthesis; selenocysteinyl-tRNA(Sec) biosynthesis; L-seryl-tRNA(Sec) from L-serine and tRNA(Sec): step 1/1. Functionally, catalyzes the attachment of serine to tRNA(Ser). Is also able to aminoacylate tRNA(Sec) with serine, to form the misacylated tRNA L-seryl-tRNA(Sec), which will be further converted into selenocysteinyl-tRNA(Sec). The sequence is that of Serine--tRNA ligase from Desulfosudis oleivorans (strain DSM 6200 / JCM 39069 / Hxd3) (Desulfococcus oleovorans).